The primary structure comprises 450 residues: Glucose-6-phosphate isomerase (450 aa).

Glu290 serves as the catalytic Proton donor. Active-site residues include His311 and Lys425.

This sequence belongs to the GPI family.

Its subcellular location is the cytoplasm. It catalyses the reaction alpha-D-glucose 6-phosphate = beta-D-fructose 6-phosphate. Its pathway is carbohydrate biosynthesis; gluconeogenesis. It functions in the pathway carbohydrate degradation; glycolysis; D-glyceraldehyde 3-phosphate and glycerone phosphate from D-glucose: step 2/4. Functionally, catalyzes the reversible isomerization of glucose-6-phosphate to fructose-6-phosphate. The sequence is that of Glucose-6-phosphate isomerase from Listeria monocytogenes serovar 1/2a (strain ATCC BAA-679 / EGD-e).